A 441-amino-acid polypeptide reads, in one-letter code: ATP-dependent protease ATPase subunit HslU (441 aa).

Residues Val18, 60–65 (GVGKTE), Asp253, Glu319, and Arg391 contribute to the ATP site.

The protein belongs to the ClpX chaperone family. HslU subfamily. A double ring-shaped homohexamer of HslV is capped on each side by a ring-shaped HslU homohexamer. The assembly of the HslU/HslV complex is dependent on binding of ATP.

It is found in the cytoplasm. ATPase subunit of a proteasome-like degradation complex; this subunit has chaperone activity. The binding of ATP and its subsequent hydrolysis by HslU are essential for unfolding of protein substrates subsequently hydrolyzed by HslV. HslU recognizes the N-terminal part of its protein substrates and unfolds these before they are guided to HslV for hydrolysis. This Nitratidesulfovibrio vulgaris (strain DP4) (Desulfovibrio vulgaris) protein is ATP-dependent protease ATPase subunit HslU.